Here is a 375-residue protein sequence, read N- to C-terminus: tRNA-specific 2-thiouridylase MnmA (375 aa).

Residues 12–19 (GMSGGVDS) and Met38 contribute to the ATP site. Residues 98–100 (NPD) are interaction with target base in tRNA. The active-site Nucleophile is Cys103. Residues Cys103 and Cys200 are joined by a disulfide bond. Gly127 is a binding site for ATP. The tract at residues 150–152 (KDQ) is interaction with tRNA. The active-site Cysteine persulfide intermediate is Cys200. The interaction with tRNA stretch occupies residues 312-313 (RY).

Belongs to the MnmA/TRMU family.

It localises to the cytoplasm. It carries out the reaction S-sulfanyl-L-cysteinyl-[protein] + uridine(34) in tRNA + AH2 + ATP = 2-thiouridine(34) in tRNA + L-cysteinyl-[protein] + A + AMP + diphosphate + H(+). Its function is as follows. Catalyzes the 2-thiolation of uridine at the wobble position (U34) of tRNA, leading to the formation of s(2)U34. The chain is tRNA-specific 2-thiouridylase MnmA from Levilactobacillus brevis (strain ATCC 367 / BCRC 12310 / CIP 105137 / JCM 1170 / LMG 11437 / NCIMB 947 / NCTC 947) (Lactobacillus brevis).